A 4646-amino-acid chain; its full sequence is Cytoplasmic dynein 1 heavy chain 1 (4646 aa).

At serine 2 the chain carries N-acetylserine. The stem stretch occupies residues 53 to 1867 (EAALEEKSAL…SIQMANAKFN (1815 aa)). Phosphoserine is present on serine 70. 3 coiled-coil regions span residues 181–202 (SVEK…NIEI), 455–478 (AHRK…QLRA), and 543–566 (TEAW…RITA). The interaction with DYNC1I2 stretch occupies residues 448–703 (MVWRINPAHR…NTQEIFDDWA (256 aa)). The interaction with DYNC1LI2 stretch occupies residues 651-802 (AKQIDRQLTA…EKVEERNTIS (152 aa)). Lysine 1125 is modified (N6-acetyllysine). Coiled-coil stretches lie at residues 1171-1252 (TYVQ…AVES) and 1357-1373 (RKLR…LKSF). Position 1230 is a phosphoserine (serine 1230). AAA regions lie at residues 1868-2099 (YGFE…VLVS), 2180-2452 (EELK…LTRL), 2556-2805 (EVET…WVRG), and 2899-3168 (VFYE…GGRT). ATP contacts are provided by residues 1906 to 1913 (GPAGTGKT) and 2224 to 2231 (GPSGSGKS). Residues 2390 to 2411 (GEDEAQRRRKGKEDEGEEAASP) are disordered. ATP is bound by residues 2595 to 2602 (GPPGSGKT) and 2937 to 2944 (GVSGAGKT). Coiled coils occupy residues 3189 to 3275 (EKRS…ADKQ), 3396 to 3500 (AIAQ…KNQM), and 3737 to 3800 (EFQL…VSQQ). The segment at 3189–3500 (EKRSELEEQQ…KTSETFKNQM (312 aa)) is stalk. Position 3480 is an N6-acetyllysine (lysine 3480). 2 AAA regions span residues 3553–3782 (LSNA…EVTR) and 4005–4221 (AHMF…TVDT). Serine 4162 is subject to Phosphoserine. Position 4283 is an N6-acetyllysine (lysine 4283). Position 4366 is a phosphothreonine (threonine 4366). Serine 4368 carries the phosphoserine modification.

The protein belongs to the dynein heavy chain family. In terms of assembly, homodimer. The cytoplasmic dynein 1 complex consists of two catalytic heavy chains (HCs) and a number of non-catalytic subunits presented by intermediate chains (ICs), light intermediate chains (LICs) and light chains (LCs); the composition seems to vary in respect to the IC, LIC and LC composition. The heavy chain homodimer serves as a scaffold for the probable homodimeric assembly of the respective non-catalytic subunits. The ICs and LICs bind directly to the HC dimer and dynein LCs assemble on the IC dimer. Interacts with DYNC1LI1; DYNC1LI1 and DYNC1LI2 bind mutually exclusive to DYNC1H1. Interacts with DYNC1LI2; DYNC1LI1 and DYNC1LI2 bind mutually exclusive to DYNC1H1. Interacts with DYNC1I2. Interacts with BICD2. Interacts with isoform 2 of CRACR2A. Interacts with DNALI1.

It localises to the cytoplasm. Its subcellular location is the cytoskeleton. Its function is as follows. Cytoplasmic dynein 1 acts as a motor for the intracellular retrograde motility of vesicles and organelles along microtubules. Dynein has ATPase activity; the force-producing power stroke is thought to occur on release of ADP. Plays a role in mitotic spindle assembly and metaphase plate congression. This chain is Cytoplasmic dynein 1 heavy chain 1, found in Homo sapiens (Human).